The sequence spans 207 residues: N-(5'-phosphoribosyl)anthranilate isomerase (207 aa).

It belongs to the TrpF family.

The catalysed reaction is N-(5-phospho-beta-D-ribosyl)anthranilate = 1-(2-carboxyphenylamino)-1-deoxy-D-ribulose 5-phosphate. It functions in the pathway amino-acid biosynthesis; L-tryptophan biosynthesis; L-tryptophan from chorismate: step 3/5. The protein is N-(5'-phosphoribosyl)anthranilate isomerase of Legionella pneumophila (strain Paris).